The following is a 239-amino-acid chain: MLNRISSSSPTSYVSSGSSSAGINPSINVRPPRGGPVDTLVGAASDNNLVYIGDEHGKLFIPKLITESAAKLKNAGVDHLAVEFVKHSDGAAFREALSDGKSAVKHFLEASWGRHGDAWLDKVSEALCSAHRAGIYVSGIDRKMAIDQPKTPMQKILYMKKRLALNVAWDAAATREASAVCANKSIVWGGAGHFSNSKTDGPKDMRPGLVISFDLTGRGSSRINDADEHSHIVIAGEDN.

Over residues Met-1–Ser-20 the composition is skewed to low complexity. The interval Met-1–Pro-31 is disordered.

It localises to the secreted. The protein resides in the host cell. In terms of biological role, virulence factor recognized by the A.thaliana disease resistance protein RBA1, which triggers plant cell death. HopBA1 enhances RBA1 self-association, which is necessary for ectopic autoactivation of host cell death. The protein is Type III effector protein HopBA1 of Pseudomonas syringae pv. aptata.